The following is a 386-amino-acid chain: N-terminal EF-hand calcium-binding protein 2 (386 aa).

Arg-10 bears the Omega-N-methylarginine mark. Arg-42 carries the post-translational modification Asymmetric dimethylarginine. 2 EF-hand domains span residues 60–95 (GGTAVILDIFRRADKNDDGKLSLEEFQLFFADGVLN) and 96–129 (EKELEDLFHTIDSDNTNHVDTKELCDYFVDHMGD). Asp-73, Asn-75, Asp-77, Lys-79, Glu-84, Asp-107, Asp-109, Thr-111, His-113, and Glu-118 together coordinate Ca(2+). A coiled-coil region spans residues 170–201 (LKETANQIQSLLSSVESAVEAIEEQTSQLRQN). Residues 286 to 375 (QLVRQEMAVC…SQPEALSRIL (90 aa)) form the ABM domain.

As to quaternary structure, interacts (calcium-dependent) with ADORA2A and GRM5. In terms of tissue distribution, expressed in brain. Expressed in the spinal dorsal horn with especially strong expression in lamina IIi; found in excitory synaptic boutons and in ependymal cells (at protein level).

The protein resides in the cytoplasm. The protein localises to the cell projection. It localises to the dendrite. It is found in the axon. Its subcellular location is the cell membrane. May act as a signaling scaffold protein that senses intracellular calcium. Can modulate ligand-induced internalization of ADORA2A and coupling efficiency of mGluR5/GRM5; for both receptors may regulate signaling activity such as promoting MAPK1/3 (ERK1/2) activation. The polypeptide is N-terminal EF-hand calcium-binding protein 2 (NECAB2) (Homo sapiens (Human)).